The following is a 124-amino-acid chain: Small ribosomal subunit protein uS12 (124 aa).

Asp-89 carries the 3-methylthioaspartic acid modification.

This sequence belongs to the universal ribosomal protein uS12 family. As to quaternary structure, part of the 30S ribosomal subunit. Contacts proteins S8 and S17. May interact with IF1 in the 30S initiation complex.

Functionally, with S4 and S5 plays an important role in translational accuracy. Interacts with and stabilizes bases of the 16S rRNA that are involved in tRNA selection in the A site and with the mRNA backbone. Located at the interface of the 30S and 50S subunits, it traverses the body of the 30S subunit contacting proteins on the other side and probably holding the rRNA structure together. The combined cluster of proteins S8, S12 and S17 appears to hold together the shoulder and platform of the 30S subunit. The polypeptide is Small ribosomal subunit protein uS12 (Edwardsiella ictaluri (strain 93-146)).